The chain runs to 266 residues: Orotidine 5'-phosphate decarboxylase (266 aa).

Substrate contacts are provided by residues D37, 59–61 (KTH), 91–100 (DRKFADIGNT), Y217, and R235. K93 functions as the Proton donor in the catalytic mechanism.

This sequence belongs to the OMP decarboxylase family.

It carries out the reaction orotidine 5'-phosphate + H(+) = UMP + CO2. It functions in the pathway pyrimidine metabolism; UMP biosynthesis via de novo pathway; UMP from orotate: step 2/2. This chain is Orotidine 5'-phosphate decarboxylase (URA3), found in Cyberlindnera jadinii (Torula yeast).